A 79-amino-acid chain; its full sequence is Conotoxin ArMSGL-0122 (79 aa).

The signal sequence occupies residues 1–20; it reads MSRLGIMVLTLLLLVFIVTS. The propeptide occupies 21 to 44; it reads HQDAGEKQATQRAAINFRWKRSLT. 3 cysteine pairs are disulfide-bonded: cysteine 52/cysteine 64, cysteine 56/cysteine 73, and cysteine 63/cysteine 77. Leucine 78 carries the leucine amide modification.

Belongs to the conotoxin O3 superfamily. In terms of tissue distribution, expressed by the venom duct.

Its subcellular location is the secreted. The protein is Conotoxin ArMSGL-0122 of Conus arenatus (Sand-dusted cone).